We begin with the raw amino-acid sequence, 535 residues long: Nuclear/nucleolar GTPase 2 (535 aa).

The segment at 1–42 (MAKKKERAVNVSGKPRHSLDVNRANDKKGAGGGAGGGGGGRS) is disordered. The span at 17–29 (HSLDVNRANDKKG) shows a compositional bias: basic and acidic residues. Gly residues predominate over residues 30 to 41 (AGGGAGGGGGGR). Positions 213-374 (WGELYKVIDS…LIDCPGVVYQ (162 aa)) constitute a CP-type G domain. The segment at 261–264 (NKCD) is G4. Residues 290–292 (SIN) are G5. Positions 323 to 330 (GYPNVGKS) are G1. The interval 349 to 353 (GETKV) is G2. The interval 367–370 (DCPG) is G3. Residues 464–494 (FFVPPPQQGEDSPSETAEPVEKSDEEGVSSD) are disordered.

This sequence belongs to the TRAFAC class YlqF/YawG GTPase family. RsgA subfamily. In terms of assembly, interacts (via N-terminus) with the 60S ribosomal proteins RPL10A. This interaction is enhanced by the addition of GTP. As to expression, expressed in roots, shoot apical meristem, leaves, leaf sheaths and flowers.

It localises to the nucleus. It is found in the nucleolus. Its activity is regulated as follows. The GTPase activity is stimulated in the presence of ribosomes, particularly of the 60S subunit. GTPase involved in pre-60S ribosomal subunit maturation. The chain is Nuclear/nucleolar GTPase 2 from Oryza sativa subsp. japonica (Rice).